The primary structure comprises 171 residues: 2-vinyl bacteriochlorophyllide hydratase (171 aa).

Its pathway is porphyrin-containing compound metabolism; bacteriochlorophyll biosynthesis (light-independent). In Rhodobacter capsulatus (strain ATCC BAA-309 / NBRC 16581 / SB1003), this protein is 2-vinyl bacteriochlorophyllide hydratase (bchF).